A 112-amino-acid polypeptide reads, in one-letter code: Histone H2A, sperm (112 aa).

Gln91 is modified (N5-methylglutamine). Lys106 is covalently cross-linked (Glycyl lysine isopeptide (Lys-Gly) (interchain with G-Cter in ubiquitin)).

Belongs to the histone H2A family. The nucleosome is a histone octamer containing two molecules each of H2A, H2B, H3 and H4 assembled in one H3-H4 heterotetramer and two H2A-H2B heterodimers. The octamer wraps approximately 147 bp of DNA. Post-translationally, monoubiquitination gives a specific tag for epigenetic transcriptional repression.

It localises to the nucleus. The protein localises to the chromosome. Its function is as follows. Core component of nucleosome. Nucleosomes wrap and compact DNA into chromatin, limiting DNA accessibility to the cellular machineries which require DNA as a template. Histones thereby play a central role in transcription regulation, DNA repair, DNA replication and chromosomal stability. DNA accessibility is regulated via a complex set of post-translational modifications of histones, also called histone code, and nucleosome remodeling. This Lytechinus pictus (Painted sea urchin) protein is Histone H2A, sperm.